We begin with the raw amino-acid sequence, 54 residues long: Salt stress-induced hydrophobic peptide ESI3 (54 aa).

2 consecutive transmembrane segments (helical) span residues G2–L22 and L34–V54.

Belongs to the UPF0057 (PMP3) family.

It is found in the membrane. This chain is Salt stress-induced hydrophobic peptide ESI3 (ESI3), found in Thinopyrum elongatum (Tall wheatgrass).